A 508-amino-acid chain; its full sequence is Photosystem II CP47 reaction center protein (508 aa).

Transmembrane regions (helical) follow at residues 21–36 (AVHIMHTALVAGWAGS), 101–115 (IVFSGLCFLAAIWHW), 140–156 (GIHLFLSGVACFGFGAF), 203–218 (IAAGTLGILAGLFHLS), 237–252 (VLSSSIAAVFFAAFVV), and 457–472 (SFALLFFFGHIWHGAR).

Belongs to the PsbB/PsbC family. PsbB subfamily. As to quaternary structure, PSII is composed of 1 copy each of membrane proteins PsbA, PsbB, PsbC, PsbD, PsbE, PsbF, PsbH, PsbI, PsbJ, PsbK, PsbL, PsbM, PsbT, PsbX, PsbY, PsbZ, Psb30/Ycf12, at least 3 peripheral proteins of the oxygen-evolving complex and a large number of cofactors. It forms dimeric complexes. Requires Binds multiple chlorophylls. PSII binds additional chlorophylls, carotenoids and specific lipids. as cofactor.

It localises to the plastid. The protein resides in the chloroplast thylakoid membrane. One of the components of the core complex of photosystem II (PSII). It binds chlorophyll and helps catalyze the primary light-induced photochemical processes of PSII. PSII is a light-driven water:plastoquinone oxidoreductase, using light energy to abstract electrons from H(2)O, generating O(2) and a proton gradient subsequently used for ATP formation. The sequence is that of Photosystem II CP47 reaction center protein from Buxus microphylla (Littleleaf boxwood).